Reading from the N-terminus, the 619-residue chain is DEAD-box ATP-dependent RNA helicase 35B (619 aa).

Composition is skewed to low complexity over residues 1–10 (MAAAAAAAAA) and 49–58 (PPTTNAVAVA). Residues 1–72 (MAAAAAAAAA…PPRSTSSPAV (72 aa)) are disordered. A Q motif motif is present at residues 173–201 (RSFGDLRLPEPILRALRGKGIEKPTPIQV). Positions 204 to 388 (LPVALSGRDM…KSALVKPIIV (185 aa)) constitute a Helicase ATP-binding domain. 217-224 (AFTGSGKT) lines the ATP pocket. A DEAD box motif is present at residues 336 to 339 (DEAD). Positions 399 to 559 (DVIQEVEYVK…RLPPILADLD (161 aa)) constitute a Helicase C-terminal domain. Residues 576–593 (KGCAFCGGLGHRIEACPK) form a CCHC-type zinc finger.

It belongs to the DEAD box helicase family. DDX41 subfamily.

It carries out the reaction ATP + H2O = ADP + phosphate + H(+). In Oryza sativa subsp. japonica (Rice), this protein is DEAD-box ATP-dependent RNA helicase 35B.